A 97-amino-acid polypeptide reads, in one-letter code: Peptide YY-A (97 aa).

The first 28 residues, 1-28, serve as a signal peptide directing secretion; the sequence is MAVMLKPWTVVATVLICVLLCLGTFVDA. Tyrosine amide is present on tyrosine 64. Positions 68–97 are cleaved as a propeptide — C-terminal extension; that stretch reads STSEDVMAELLFGDDTEHKQRSRYDDSFMW.

This sequence belongs to the NPY family. As to expression, mainly expressed in brainstem neurons, and in the telencephalon. Also expressed in intestinal endocrine cells.

The protein localises to the secreted. The chain is Peptide YY-A (pyya) from Danio rerio (Zebrafish).